A 108-amino-acid polypeptide reads, in one-letter code: UPF0060 membrane protein YE2027 (108 aa).

4 consecutive transmembrane segments (helical) span residues 6–26 (LLFF…YLWL), 29–49 (GASM…VWLL), 59–79 (VYAA…RVVD), and 85–105 (LFDW…VAGW).

It belongs to the UPF0060 family.

Its subcellular location is the cell inner membrane. The polypeptide is UPF0060 membrane protein YE2027 (Yersinia enterocolitica serotype O:8 / biotype 1B (strain NCTC 13174 / 8081)).